The primary structure comprises 140 residues: Ribonuclease P protein subunit p20 (140 aa).

This sequence belongs to the histone-like Alba family. In terms of assembly, component of nuclear RNase P and RNase MRP complexes. RNase P consists of a catalytic RNA moiety and 10 different protein chains; POP1, POP4, POP5, POP7, RPP14, RPP21, RPP25, RPP30, RPP38 and RPP40. Within the RNase P complex, POP1, POP7 and RPP25 form the 'finger' subcomplex, POP5, RPP14, RPP40 and homodimeric RPP30 form the 'palm' subcomplex, and RPP21, POP4 and RPP38 form the 'wrist' subcomplex. All subunits of the RNase P complex interact with the catalytic RNA. Several subunits of RNase P are also part of the RNase MRP complex. RNase MRP consists of a catalytic RNA moiety and about 8 protein subunits; POP1, POP7, RPP25, RPP30, RPP38, RPP40 and possibly also POP4 and POP5. Interacts with SMN1. POP7 forms a heterodimer with RPP25 that binds to the P3 stem loop of the catalytic RNA.

It localises to the nucleus. The protein localises to the nucleolus. It is found in the cytoplasm. The protein resides in the cytoplasmic granule. Its function is as follows. Component of ribonuclease P, a ribonucleoprotein complex that generates mature tRNA molecules by cleaving their 5'-ends. Also a component of the MRP ribonuclease complex, which cleaves pre-rRNA sequences. The chain is Ribonuclease P protein subunit p20 (POP7) from Bos taurus (Bovine).